We begin with the raw amino-acid sequence, 788 residues long: Cadherin-related family member 4 (788 aa).

Positions 1 to 16 are cleaved as a signal peptide; sequence MVLLRLLVFLFAPVVS. Topologically, residues 17–686 are extracellular; the sequence is DLCSLPCFIN…DTEAFWQPQP (670 aa). 4 consecutive Cadherin domains span residues 237–338, 339–449, 444–554, and 551–674; these read LEQA…PPRC, LPAL…APRT, ACAP…EPPF, and EPPF…TPML. A glycan (N-linked (GlcNAc...) asparagine) is linked at asparagine 242. Residues 687–707 form a helical membrane-spanning segment; sequence WFVVVLTATGALLLLALGWLL. Residues 708–788 lie on the Cytoplasmic side of the membrane; that stretch reads GRLLQGLAQL…NTHTGARRWL (81 aa).

It localises to the membrane. Cadherins are calcium-dependent cell adhesion proteins. They preferentially interact with themselves in a homophilic manner in connecting cells; cadherins may thus contribute to the sorting of heterogeneous cell types. This is Cadherin-related family member 4 (CDHR4) from Homo sapiens (Human).